The sequence spans 1926 residues: Myosin-15 (1926 aa).

A Myosin N-terminal SH3-like domain is found at D29–P79. The Myosin motor domain maps to E83–D770. An N6,N6,N6-trimethyllysine modification is found at K127. G176–T183 serves as a coordination point for ATP. 2 actin-binding regions span residues L647–V669 and R749–G763. The IQ domain maps to L773–A802. The stretch at K833 to E1926 forms a coiled coil.

It belongs to the TRAFAC class myosin-kinesin ATPase superfamily. Myosin family. In terms of assembly, muscle myosin is a hexameric protein that consists of 2 heavy chain subunits (MHC), 2 alkali light chain subunits (MLC) and 2 regulatory light chain subunits (MLC-2).

The protein localises to the cytoplasm. The protein resides in the myofibril. Muscle contraction. The protein is Myosin-15 (MYH15) of Homo sapiens (Human).